The sequence spans 119 residues: Chorion class CA protein ERA.5 (119 aa).

Positions 1–21 (MSTYTFVLFCLQICLIQNVYS) are cleaved as a signal peptide. Positions 22-55 (QCLGRVGPGGPPVGPYGGPLGGPGYGPVGYGGCG) are left arm. Residues 56 to 103 (GYGGSGIGNVAVAGELPVAGSSAVMGQVPVIGAVEFAGPACAVGSVSI) form a central domain region. The interval 104–119 (SGACGPTCGCGGSPYY) is right arm.

The protein belongs to the chorion protein family.

This protein is one of many from the eggshell of the silk moth. The sequence is that of Chorion class CA protein ERA.5 (ERA.5) from Bombyx mori (Silk moth).